Here is a 227-residue protein sequence, read N- to C-terminus: Cytochrome c oxidase subunit 2 (227 aa).

The Mitochondrial intermembrane segment spans residues 1 to 14 (MAYPLQLGFQDASS). Residues 15-45 (PIMEELLHFHDHTLMIVFLISSLVLYIISLM) form a helical membrane-spanning segment. The Mitochondrial matrix portion of the chain corresponds to 46–59 (LTTKLTHTSTMDAQ). A helical transmembrane segment spans residues 60 to 87 (EVETIWTILPAIILILIALPSLRILYMM). Residues 88 to 227 (DEINNPSLTV…HFENWTTTML (140 aa)) lie on the Mitochondrial intermembrane side of the membrane. Cu cation is bound by residues histidine 161, cysteine 196, glutamate 198, cysteine 200, histidine 204, and methionine 207. Glutamate 198 is a Mg(2+) binding site.

Belongs to the cytochrome c oxidase subunit 2 family. As to quaternary structure, component of the cytochrome c oxidase (complex IV, CIV), a multisubunit enzyme composed of 14 subunits. The complex is composed of a catalytic core of 3 subunits MT-CO1, MT-CO2 and MT-CO3, encoded in the mitochondrial DNA, and 11 supernumerary subunits COX4I, COX5A, COX5B, COX6A, COX6B, COX6C, COX7A, COX7B, COX7C, COX8 and NDUFA4, which are encoded in the nuclear genome. The complex exists as a monomer or a dimer and forms supercomplexes (SCs) in the inner mitochondrial membrane with NADH-ubiquinone oxidoreductase (complex I, CI) and ubiquinol-cytochrome c oxidoreductase (cytochrome b-c1 complex, complex III, CIII), resulting in different assemblies (supercomplex SCI(1)III(2)IV(1) and megacomplex MCI(2)III(2)IV(2)). Found in a complex with TMEM177, COA6, COX18, COX20, SCO1 and SCO2. Interacts with TMEM177 in a COX20-dependent manner. Interacts with COX20. Interacts with COX16. It depends on Cu cation as a cofactor.

It localises to the mitochondrion inner membrane. The enzyme catalyses 4 Fe(II)-[cytochrome c] + O2 + 8 H(+)(in) = 4 Fe(III)-[cytochrome c] + 2 H2O + 4 H(+)(out). Its function is as follows. Component of the cytochrome c oxidase, the last enzyme in the mitochondrial electron transport chain which drives oxidative phosphorylation. The respiratory chain contains 3 multisubunit complexes succinate dehydrogenase (complex II, CII), ubiquinol-cytochrome c oxidoreductase (cytochrome b-c1 complex, complex III, CIII) and cytochrome c oxidase (complex IV, CIV), that cooperate to transfer electrons derived from NADH and succinate to molecular oxygen, creating an electrochemical gradient over the inner membrane that drives transmembrane transport and the ATP synthase. Cytochrome c oxidase is the component of the respiratory chain that catalyzes the reduction of oxygen to water. Electrons originating from reduced cytochrome c in the intermembrane space (IMS) are transferred via the dinuclear copper A center (CU(A)) of subunit 2 and heme A of subunit 1 to the active site in subunit 1, a binuclear center (BNC) formed by heme A3 and copper B (CU(B)). The BNC reduces molecular oxygen to 2 water molecules using 4 electrons from cytochrome c in the IMS and 4 protons from the mitochondrial matrix. This Tupaia glis (Common tree shrew) protein is Cytochrome c oxidase subunit 2 (MT-CO2).